A 400-amino-acid polypeptide reads, in one-letter code: MKILVLNCGSSSIKYKLFDMTSGEVMAQGGIEKIGLPGAFLKLTDKDGKKVVIEREIPGHQEGIEFILSVLTDATYGCIKDYKEIDAVGHRVVHGGEEFASSVLINQDVINKVIECSDLAPLHNPANLKGVRAMEALIPGIPQVAVFDTAFHQTMPDYAYMYGLPYEMYKKYGVRRYGFHGTSHRYVSRRACEILGVPYEDQKIITAHVGNGGSITAIKNGKSVDTSMGLTPVEGLLMGTRCGDVDAGALSFIMDKEGMDGAGLSDLINKRSGVAGLSGISSDMREIEAAVAAGNPRAIMTLNVYNYRIKKYIGAYAAAMGGCDILVWTGGVGENQWATRRAVCENMEYMGMKIDVEKNEGMRGEEMVISTPDSKVTIIVVPTDEEFMIAADTLEILDKK.

Position 7 (asparagine 7) interacts with Mg(2+). Lysine 14 provides a ligand contact to ATP. Arginine 91 is a binding site for substrate. Aspartate 148 acts as the Proton donor/acceptor in catalysis. Residues histidine 208 to glycine 212, aspartate 283 to arginine 285, and glycine 331 to asparagine 335 contribute to the ATP site. A Mg(2+)-binding site is contributed by glutamate 385.

It belongs to the acetokinase family. In terms of assembly, homodimer. Requires Mg(2+) as cofactor. The cofactor is Mn(2+).

It is found in the cytoplasm. The enzyme catalyses acetate + ATP = acetyl phosphate + ADP. Its pathway is metabolic intermediate biosynthesis; acetyl-CoA biosynthesis; acetyl-CoA from acetate: step 1/2. Its function is as follows. Catalyzes the formation of acetyl phosphate from acetate and ATP. Can also catalyze the reverse reaction. The polypeptide is Acetate kinase (Parabacteroides distasonis (strain ATCC 8503 / DSM 20701 / CIP 104284 / JCM 5825 / NCTC 11152)).